A 435-amino-acid chain; its full sequence is Glutamate-1-semialdehyde 2,1-aminomutase (435 aa).

Lys-266 is modified (N6-(pyridoxal phosphate)lysine).

This sequence belongs to the class-III pyridoxal-phosphate-dependent aminotransferase family. HemL subfamily. In terms of assembly, homodimer. The cofactor is pyridoxal 5'-phosphate.

The protein localises to the cytoplasm. It carries out the reaction (S)-4-amino-5-oxopentanoate = 5-aminolevulinate. Its pathway is porphyrin-containing compound metabolism; protoporphyrin-IX biosynthesis; 5-aminolevulinate from L-glutamyl-tRNA(Glu): step 2/2. The chain is Glutamate-1-semialdehyde 2,1-aminomutase from Coxiella burnetii (strain CbuG_Q212) (Coxiella burnetii (strain Q212)).